Consider the following 258-residue polypeptide: Large ribosomal subunit protein bL28m (258 aa).

A mitochondrion-targeting transit peptide spans methionine 1–phenylalanine 21.

It belongs to the bacterial ribosomal protein bL28 family. In terms of assembly, component of the mitochondrial large ribosomal subunit (mt-LSU). Mature yeast 74S mitochondrial ribosomes consist of a small (37S) and a large (54S) subunit. The 37S small subunit contains a 15S ribosomal RNA (15S mt-rRNA) and 34 different proteins. The 54S large subunit contains a 21S rRNA (21S mt-rRNA) and 46 different proteins.

It localises to the mitochondrion. Functionally, component of the mitochondrial ribosome (mitoribosome), a dedicated translation machinery responsible for the synthesis of mitochondrial genome-encoded proteins, including at least some of the essential transmembrane subunits of the mitochondrial respiratory chain. The mitoribosomes are attached to the mitochondrial inner membrane and translation products are cotranslationally integrated into the membrane. In Saccharomyces cerevisiae (strain ATCC 204508 / S288c) (Baker's yeast), this protein is Large ribosomal subunit protein bL28m (MRPL24).